A 469-amino-acid polypeptide reads, in one-letter code: Sulfate adenylyltransferase subunit 1 (469 aa).

The tr-type G domain occupies 22–224; the sequence is KDLMRFITCG…NMTWYPGSPL (203 aa). Positions 31-38 are G1; the sequence is GSVDDGKS. 31-38 is a binding site for GTP; sequence GSVDDGKS. Residues 89 to 93 form a G2 region; sequence GITID. The G3 stretch occupies residues 110–113; that stretch reads DTPG. GTP-binding positions include 110–114 and 165–168; these read DTPGH and NKMD. The segment at 165-168 is G4; it reads NKMD. The tract at residues 202 to 204 is G5; sequence SAL.

Belongs to the TRAFAC class translation factor GTPase superfamily. Classic translation factor GTPase family. CysN/NodQ subfamily. As to quaternary structure, heterodimer composed of CysD, the smaller subunit, and CysN.

The catalysed reaction is sulfate + ATP + H(+) = adenosine 5'-phosphosulfate + diphosphate. It functions in the pathway sulfur metabolism; hydrogen sulfide biosynthesis; sulfite from sulfate: step 1/3. Its function is as follows. With CysD forms the ATP sulfurylase (ATPS) that catalyzes the adenylation of sulfate producing adenosine 5'-phosphosulfate (APS) and diphosphate, the first enzymatic step in sulfur assimilation pathway. APS synthesis involves the formation of a high-energy phosphoric-sulfuric acid anhydride bond driven by GTP hydrolysis by CysN coupled to ATP hydrolysis by CysD. This chain is Sulfate adenylyltransferase subunit 1, found in Psychromonas ingrahamii (strain DSM 17664 / CCUG 51855 / 37).